Here is a 474-residue protein sequence, read N- to C-terminus: Protein nucleotidyltransferase YdiU (474 aa).

The ATP site is built by Gly89, Gly91, Arg92, Lys112, Asp124, Gly125, Arg175, and Arg182. Catalysis depends on Asp256, which acts as the Proton acceptor. Residues Asn257 and Asp266 each coordinate Mg(2+). Residue Asp266 participates in ATP binding.

This sequence belongs to the SELO family. It depends on Mg(2+) as a cofactor. Mn(2+) is required as a cofactor.

It carries out the reaction L-seryl-[protein] + ATP = 3-O-(5'-adenylyl)-L-seryl-[protein] + diphosphate. The enzyme catalyses L-threonyl-[protein] + ATP = 3-O-(5'-adenylyl)-L-threonyl-[protein] + diphosphate. It catalyses the reaction L-tyrosyl-[protein] + ATP = O-(5'-adenylyl)-L-tyrosyl-[protein] + diphosphate. The catalysed reaction is L-histidyl-[protein] + UTP = N(tele)-(5'-uridylyl)-L-histidyl-[protein] + diphosphate. It carries out the reaction L-seryl-[protein] + UTP = O-(5'-uridylyl)-L-seryl-[protein] + diphosphate. The enzyme catalyses L-tyrosyl-[protein] + UTP = O-(5'-uridylyl)-L-tyrosyl-[protein] + diphosphate. Its function is as follows. Nucleotidyltransferase involved in the post-translational modification of proteins. It can catalyze the addition of adenosine monophosphate (AMP) or uridine monophosphate (UMP) to a protein, resulting in modifications known as AMPylation and UMPylation. This Corynebacterium glutamicum (strain ATCC 13032 / DSM 20300 / JCM 1318 / BCRC 11384 / CCUG 27702 / LMG 3730 / NBRC 12168 / NCIMB 10025 / NRRL B-2784 / 534) protein is Protein nucleotidyltransferase YdiU.